A 98-amino-acid polypeptide reads, in one-letter code: MALTKAELAENLFDKLGFSKRDAKETVEVFFEEIRKALESGEQVKLSGFGNFDLRDKNERPGRNPKTGEDIPITARRVVTFRPGQKLKARVENLKADQ.

The tract at residues 51-71 (NFDLRDKNERPGRNPKTGEDI) is disordered. Residues 53 to 69 (DLRDKNERPGRNPKTGE) show a composition bias toward basic and acidic residues.

It belongs to the bacterial histone-like protein family. In terms of assembly, heterodimer of an alpha and a beta chain.

In terms of biological role, this protein is one of the two subunits of integration host factor, a specific DNA-binding protein that functions in genetic recombination as well as in transcriptional and translational control. This Vibrio campbellii (strain ATCC BAA-1116) protein is Integration host factor subunit alpha.